The sequence spans 264 residues: Hydroxyethylthiazole kinase (264 aa).

M52 serves as a coordination point for substrate. ATP-binding residues include R127 and T173. G200 contributes to the substrate binding site.

It belongs to the Thz kinase family. It depends on Mg(2+) as a cofactor.

It carries out the reaction 5-(2-hydroxyethyl)-4-methylthiazole + ATP = 4-methyl-5-(2-phosphooxyethyl)-thiazole + ADP + H(+). Its pathway is cofactor biosynthesis; thiamine diphosphate biosynthesis; 4-methyl-5-(2-phosphoethyl)-thiazole from 5-(2-hydroxyethyl)-4-methylthiazole: step 1/1. Catalyzes the phosphorylation of the hydroxyl group of 4-methyl-5-beta-hydroxyethylthiazole (THZ). This chain is Hydroxyethylthiazole kinase, found in Serratia proteamaculans (strain 568).